An 82-amino-acid chain; its full sequence is Splicing factor U2AF 35 kDa subunit (82 aa).

An N-acetylalanine modification is found at A2. A C3H1-type zinc finger spans residues 12-40 (EKDKVNCSFYFKIGACRHGDRCSRLHNKP). K39 carries the post-translational modification N6-methyllysine. The 18-residue stretch at 65–82 (SHCHVSDVEVQEHYDNFF) folds into the RRM domain.

This sequence belongs to the splicing factor SR family. As to quaternary structure, identified in the spliceosome C complex. Heterodimer with U2AF2. Interacts (via RS domain) with PHF5A (via N-terminus). Interacts with ZRANB2. Interacts with SDE2. Interacts with SF3B1.

It localises to the nucleus. It is found in the nucleus speckle. Its function is as follows. Plays a critical role in both constitutive and enhancer-dependent splicing by mediating protein-protein interactions and protein-RNA interactions required for accurate 3'-splice site selection. Recruits U2 snRNP to the branch point. Directly mediates interactions between U2AF2 and proteins bound to the enhancers and thus may function as a bridge between U2AF2 and the enhancer complex to recruit it to the adjacent intron. This Sus scrofa (Pig) protein is Splicing factor U2AF 35 kDa subunit (U2AF1).